Here is a 369-residue protein sequence, read N- to C-terminus: Phosphoribosyl pyrophosphate synthase-associated protein 2 (369 aa).

N-acetylmethionine is present on Met-1. The residue at position 5 (Thr-5) is a Phosphothreonine. 3 positions are modified to phosphoserine: Ser-219, Ser-227, and Ser-233.

Belongs to the ribose-phosphate pyrophosphokinase family. In terms of assembly, binds to PRPS1 and PRPS2.

Functionally, seems to play a negative regulatory role in 5-phosphoribose 1-diphosphate synthesis. This Pongo abelii (Sumatran orangutan) protein is Phosphoribosyl pyrophosphate synthase-associated protein 2 (PRPSAP2).